A 326-amino-acid chain; its full sequence is Adenosine receptor A1 (326 aa).

Over 1–10 (MPPYISAFQA) the chain is Extracellular. Residues 11–33 (AYIGIEVLIALVSVPGNVLVIWA) form a helical membrane-spanning segment. The Cytoplasmic segment spans residues 34–46 (VKVNQALRDATFC). The helical transmembrane segment at 47-69 (FIVSLAVADVAVGALVIPLAILI) threads the bilayer. Residues 70 to 80 (NIGPQTYFHTC) are Extracellular-facing. Cys80 and Cys169 are joined by a disulfide. Residues 81-102 (LMVACPVLILTQSSILALLAIA) form a helical membrane-spanning segment. Residues 103–123 (VDRYLRVKIPLRYKTVVTQRR) lie on the Cytoplasmic side of the membrane. Residues 124–146 (AAVAIAGCWILSLVVGLTPMFGW) form a helical membrane-spanning segment. Topologically, residues 147 to 176 (NNLSEVEQAWIANGSVGEPVIKCEFEKVIS) are extracellular. Asn148 and Asn159 each carry an N-linked (GlcNAc...) asparagine glycan. A helical transmembrane segment spans residues 177-201 (MEYMVYFNFFVWVLPPLLLMVLIYL). Over 202–235 (EVFYLIRKQLNKKVSASSGDPQKYYGKELKIAKS) the chain is Cytoplasmic. The chain crosses the membrane as a helical span at residues 236–259 (LALILFLFALSWLPLHILNCITLF). Over 260-267 (CPTCQKPS) the chain is Extracellular. The helical transmembrane segment at 268–292 (ILIYIAIFLTHGNSAMNPIVYAFRI) threads the bilayer. The Cytoplasmic portion of the chain corresponds to 293–326 (HKFRVTFLKIWNDHFRCQPKPPIEEDIPEEKADD). Cys309 carries S-palmitoyl cysteine lipidation.

This sequence belongs to the G-protein coupled receptor 1 family.

Its subcellular location is the cell membrane. Its function is as follows. Receptor for adenosine. The activity of this receptor is mediated by G proteins which inhibit adenylyl cyclase. This is Adenosine receptor A1 (Adora1) from Mus musculus (Mouse).